A 618-amino-acid polypeptide reads, in one-letter code: 1-deoxy-D-xylulose-5-phosphate synthase (618 aa).

Thiamine diphosphate-binding positions include histidine 76 and glycine 117–serine 119. Aspartate 148 is a Mg(2+) binding site. Thiamine diphosphate is bound by residues glycine 149–alanine 150, asparagine 177, tyrosine 284, and glutamate 364. Position 177 (asparagine 177) interacts with Mg(2+).

This sequence belongs to the transketolase family. DXPS subfamily. In terms of assembly, homodimer. Requires Mg(2+) as cofactor. Thiamine diphosphate is required as a cofactor.

The catalysed reaction is D-glyceraldehyde 3-phosphate + pyruvate + H(+) = 1-deoxy-D-xylulose 5-phosphate + CO2. The protein operates within metabolic intermediate biosynthesis; 1-deoxy-D-xylulose 5-phosphate biosynthesis; 1-deoxy-D-xylulose 5-phosphate from D-glyceraldehyde 3-phosphate and pyruvate: step 1/1. Its function is as follows. Catalyzes the acyloin condensation reaction between C atoms 2 and 3 of pyruvate and glyceraldehyde 3-phosphate to yield 1-deoxy-D-xylulose-5-phosphate (DXP). The chain is 1-deoxy-D-xylulose-5-phosphate synthase from Francisella philomiragia subsp. philomiragia (strain ATCC 25017 / CCUG 19701 / FSC 153 / O#319-036).